The primary structure comprises 1116 residues: Probable chitinase LysM11 (1116 aa).

The 51-residue stretch at 233 to 283 folds into the LysM domain; it reads GTYTIQTNDNCAEIAAHFGVTQDDIYDLNEDTWGWAGCGTNDLKADQVICL. Residues 346-719 form the GH18 domain; it reads FYHVAYFEVF…LGVDPDSDEA (374 aa). The Proton donor role is filled by glutamate 466. Tyrosine 467 and tryptophan 701 together coordinate chitin.

This sequence belongs to the glycosyl hydrolase 18 family. Chitinase class V subfamily.

The enzyme catalyses Random endo-hydrolysis of N-acetyl-beta-D-glucosaminide (1-&gt;4)-beta-linkages in chitin and chitodextrins.. Its function is as follows. Probable chitinase involved in the degradation of chitin, a component of the cell walls of fungi and exoskeletal elements of some animals (including worms and arthropods). Might be involved in manipulation of host defenses for successful infection. This Penicillium expansum (Blue mold rot fungus) protein is Probable chitinase LysM11.